Here is a 538-residue protein sequence, read N- to C-terminus: MSSPLASELSELAALRPGFRLSAPHARVAPRAATHARGRGRASHAGQPRLRSSCPGPSPGKRRVVPSGGAQPRVLPALSSRSHLFPMASHPQTRIQAYLEKNKIGPLFEELMTKLITETPDQPIPFLIDHLQSKQGNRGQLQRTLSGSAALWAESEKSESKGTRRDFRSYDKPWQLNAKKPKKSKSDLAVSNISPPSPDSKSLPRSVEHPKWNWRTKPQSRDFDELNHILQESKKLGKALENLSRSIAISDELDKETVTFNSSLLRPRVIGEWIGREENDADPLAAEMLQPPIPRSKNDQWESEDSGSSPAGSLKMEPKNKGLKQQQQQHKKLLAAMLSQDSFESIHSPTPSVTEEDIDNEDDAMELLEDLNDLRMEGVTTLVPSGSKFNQGRPTYPAEPQAKVTLNICSRCARLQGDNLEERTEESLPILHSPDEKIPDSFDSLPGTEEALMEEGDEFEKASKLTGPGEASSGVGHSLKNYMEEDESLKQLQVVHQPWILPSDTESEGVEAEQEKRSADLLLCVPCSSCPTLVYSGL.

Disordered regions lie at residues 20-71 (RLSA…GGAQ), 151-211 (LWAE…EHPK), 288-331 (MLQP…QQHK), and 458-482 (EFEK…LKNY). Residues 154–171 (ESEKSESKGTRRDFRSYD) show a composition bias toward basic and acidic residues.

This is an uncharacterized protein from Homo sapiens (Human).